Consider the following 334-residue polypeptide: 4-hydroxy-2-methyl-3-oxo-4-farnesyl-3,4-dihydroquinoline-1-oxide ketoreductase (334 aa).

The active-site Proton donor is Y139.

It belongs to the 3-beta-HSD family.

The catalysed reaction is aurachin B + NAD(+) + H2O = 4-hydroxy-2-methyl-3-oxo-4-[(2E,6E)-farnesyl]-3,4-dihydroquinoline 1-oxide + NADH. It catalyses the reaction 3,4-dihydroxy-2-methyl-4-[(2E,6E)-farnesyl]-3,4-dihydroquinoline 1-oxide + NAD(+) = 4-hydroxy-2-methyl-3-oxo-4-[(2E,6E)-farnesyl]-3,4-dihydroquinoline 1-oxide + NADH + H(+). Functionally, ketoreductase that catalyzes the final step in the conversion of aurachin C to aurachin B. Catalyzes the reduction of 4-hydroxy-2-methyl-3-oxo-4-[(2E,6E)-farnesyl]-3,4-dihydroquinoline-1-oxide to form 3,4-dihydroxy-2-methyl-4-[(2E,6E)-farnesyl]-3,4-dihydroquinoline 1-oxide, which then undergoes a spontaneous dehydration to form aurachin B. Accepts both NADH and NADPH, but has a preference for NADH. The polypeptide is 4-hydroxy-2-methyl-3-oxo-4-farnesyl-3,4-dihydroquinoline-1-oxide ketoreductase (Stigmatella aurantiaca).